A 334-amino-acid polypeptide reads, in one-letter code: Mediator of RNA polymerase II transcription subunit 4 (334 aa).

The stretch at 76–100 forms a coiled coil; it reads LIRTLKAHVEKRDEVIQQVENNLKA. The span at 188–203 shows a compositional bias: low complexity; it reads SSAQKPIIASPSASSS. Disordered stretches follow at residues 188-234 and 252-334; these read SSAQ…GYGA and EKQW…GRNK. Composition is skewed to polar residues over residues 204 to 225 and 264 to 282; these read NGGTAPTRTVGTPLVNSATNGD and ATSSQSPLSGAPQSPSSPS.

The protein belongs to the Mediator complex subunit 4 family. Component of the Mediator complex.

It is found in the nucleus. Its function is as follows. Component of the Mediator complex, a coactivator involved in the regulated transcription of nearly all RNA polymerase II-dependent genes. Mediator functions as a bridge to convey information from gene-specific regulatory proteins to the basal RNA polymerase II transcription machinery. Mediator is recruited to promoters by direct interactions with regulatory proteins and serves as a scaffold for the assembly of a functional preinitiation complex with RNA polymerase II and the general transcription factors. The chain is Mediator of RNA polymerase II transcription subunit 4 (mdt-4) from Caenorhabditis briggsae.